Reading from the N-terminus, the 254-residue chain is Mediator of RNA polymerase II transcription subunit 6 (254 aa).

The disordered stretch occupies residues 190–254; it reads PTFYQTKPGE…PPPEKRARVQ (65 aa). Pro residues predominate over residues 227-245; that stretch reads PPAPPAPPRPPPQTTPNKP.

It belongs to the Mediator complex subunit 6 family. In terms of assembly, component of the Mediator complex.

It localises to the nucleus. Component of the Mediator complex, a coactivator involved in the regulated transcription of nearly all RNA polymerase II-dependent genes. Mediator functions as a bridge to convey information from gene-specific regulatory proteins to the basal RNA polymerase II transcription machinery. Mediator is recruited to promoters by direct interactions with regulatory proteins and serves as a scaffold for the assembly of a functional preinitiation complex with RNA polymerase II and the general transcription factors. This is Mediator of RNA polymerase II transcription subunit 6 (med6) from Danio rerio (Zebrafish).